Here is a 180-residue protein sequence, read N- to C-terminus: MSILADTEKKMATALEFFQKEIRAFRTGKAHPALVETVTVDVYGTTMRLSDLASISVADTRQLVISPYDANNVSAISKGIIAANLNLQPDAEGAIIRIKIPEPTAEYRNEVIKQLRRKSEEAKVTIRNVRREANDKLKKDSDLTEDAVKGMEKKIQELTDKFCKQIDEMSKQKEADLSSI.

It belongs to the RRF family.

The protein localises to the cytoplasm. Responsible for the release of ribosomes from messenger RNA at the termination of protein biosynthesis. May increase the efficiency of translation by recycling ribosomes from one round of translation to another. The polypeptide is Ribosome-recycling factor (Chlamydia felis (strain Fe/C-56) (Chlamydophila felis)).